Consider the following 535-residue polypeptide: RAN GTPase-activating protein 1 (535 aa).

Residues Met-1–Asp-115 are WPP. LRR repeat units lie at residues Gly-208–Ser-231, Gln-236–Glu-259, Thr-264–Glu-287, Cys-320–Lys-343, Glu-353–Ser-376, Ala-377–Ala-400, Lys-405–Lys-428, His-433–Gln-456, and Lys-461–Asp-488. Residues Leu-493–Glu-535 are disordered. A compositionally biased stretch (acidic residues) spans Asp-497–Glu-520.

It belongs to the RNA1 family. As to quaternary structure, homodimer. Interacts with WIP1 through its WPP domain. Component of Ran complexes at least composed of WIT1 or WIT2, RANGAP1 or RANGAP2, and WIP1 or WIP2 or WIP3. Interacts directly with WIT1, WIP2 and WIP3. Interacts with POK1.

The protein localises to the cytoplasm. The protein resides in the nucleus envelope. Its subcellular location is the nucleus membrane. It is found in the cytoskeleton. It localises to the spindle. The protein localises to the phragmoplast. GTPase activator for the nuclear Ras-related regulatory protein Ran, converting it to the putatively inactive GDP-bound state. Plays a role in spatial signaling during cell division. This Arabidopsis thaliana (Mouse-ear cress) protein is RAN GTPase-activating protein 1 (RANGAP1).